Here is a 339-residue protein sequence, read N- to C-terminus: Leucine-rich repeat-containing protein 59 (339 aa).

The Cytoplasmic portion of the chain corresponds to M1–R282. LRR repeat units lie at residues S10 to P31, K40 to L61, H63 to L84, and S86 to L107. Residues M181 to T254 adopt a coiled-coil conformation. The segment at S186 to S275 is disordered. Residues E187–Q256 show a composition bias toward basic and acidic residues. The helical transmembrane segment at A283–L300 threads the bilayer. Topologically, residues T301–Q339 are lumenal.

Interacts with SGO1.

The protein resides in the microsome membrane. Its subcellular location is the endoplasmic reticulum membrane. It localises to the nucleus envelope. Its function is as follows. Required for nuclear import of FGF1. This Gallus gallus (Chicken) protein is Leucine-rich repeat-containing protein 59 (LRRC59).